The chain runs to 757 residues: RNA cytosine C(5)-methyltransferase NSUN2 (757 aa).

Residues 1–35 are disordered; that stretch reads MGRRARGRRFQQPPQPEGEEDASDGGRKRGQAGWE. Position 23 is a phosphoserine (Ser-23). Residue Lys-46 forms a Glycyl lysine isopeptide (Lys-Gly) (interchain with G-Cter in SUMO2) linkage. Ser-139 carries the phosphoserine; by AURKB modification. S-adenosyl-L-methionine-binding positions include 184-190, Asp-215, Asp-242, and Asp-268; that span reads CAAPGSK. The active-site Nucleophile is the Cys-321. The disordered stretch occupies residues 436-504; it reads NKRQPKVQNK…EKKDGVCGPP (69 aa). Residues Ser-456 and Ser-473 each carry the phosphoserine modification. Over residues 463–476 the composition is skewed to polar residues; it reads GNPSDQSELESQMI. Glycyl lysine isopeptide (Lys-Gly) (interchain with G-Cter in SUMO2) cross-links involve residues Lys-510 and Lys-515. The residue at position 585 (Lys-585) is an N6-acetyllysine; alternate. At Lys-585 the chain carries N6-malonyllysine; alternate. Residue Lys-585 forms a Glycyl lysine isopeptide (Lys-Gly) (interchain with G-Cter in SUMO2); alternate linkage. At Ser-592 the chain carries Phosphoserine. Glycyl lysine isopeptide (Lys-Gly) (interchain with G-Cter in SUMO2) cross-links involve residues Lys-639, Lys-653, and Lys-659. Positions 716–757 are disordered; that stretch reads LTNENAASPEQPGDEDAKQTAQDPCVPDSVPGCDAAAAEPSR. Thr-717 is modified (phosphothreonine). Ser-723 is modified (phosphoserine).

Belongs to the class I-like SAM-binding methyltransferase superfamily. RsmB/NOP family. TRM4 subfamily. Interacts with NPM1 and NCL during interphase; interaction is disrupted following phosphorylation at Ser-139. Phosphorylated at Ser-139 by AURKB during mitosis, leading to abolish methyltransferase activity and the interaction with NPM1. Ubiquitously expressed at low level. Up-regulated in tumors. Dynamically expressed during morphogenesis and in adult skin: in adult skin, expression is up-regulated in the bulge and hair germ as soon as the hair follicle enters its growing phase (anagen). During anagen, expressed at highest level in cells of the hair germ that give rise to the hair matrix.

It localises to the nucleus. It is found in the nucleolus. The protein resides in the cytoplasm. Its subcellular location is the mitochondrion. The protein localises to the cytoskeleton. It localises to the spindle. It is found in the secreted. The protein resides in the extracellular exosome. The catalysed reaction is cytidine(48) in tRNA + S-adenosyl-L-methionine = 5-methylcytidine(48) in tRNA + S-adenosyl-L-homocysteine + H(+). The enzyme catalyses cytidine(49) in tRNA + S-adenosyl-L-methionine = 5-methylcytidine(49) in tRNA + S-adenosyl-L-homocysteine + H(+). It carries out the reaction cytidine(50) in tRNA + S-adenosyl-L-methionine = 5-methylcytidine(50) in tRNA + S-adenosyl-L-homocysteine + H(+). It catalyses the reaction cytidine(34) in tRNA precursor + S-adenosyl-L-methionine = 5-methylcytidine(34) in tRNA precursor + S-adenosyl-L-homocysteine + H(+). The catalysed reaction is a cytidine in mRNA + S-adenosyl-L-methionine = a 5-methylcytidine in mRNA + S-adenosyl-L-homocysteine + H(+). With respect to regulation, inhibited by magnesium ions. Its function is as follows. RNA cytosine C(5)-methyltransferase that methylates cytosine to 5-methylcytosine (m5C) in various RNAs, such as tRNAs, mRNAs and some long non-coding RNAs (lncRNAs). Involved in various processes, such as epidermal stem cell differentiation, testis differentiation and maternal to zygotic transition during early development: acts by increasing protein synthesis; cytosine C(5)-methylation promoting tRNA stability and preventing mRNA decay. Methylates cytosine to 5-methylcytosine (m5C) at positions 34 and 48 of intron-containing tRNA(Leu)(CAA) precursors, and at positions 48, 49 and 50 of tRNA(Gly)(GCC) precursors. tRNA methylation is required generation of RNA fragments derived from tRNAs (tRFs). Also mediates C(5)-methylation of mitochondrial tRNAs. Catalyzes cytosine C(5)-methylation of mRNAs, leading to stabilize them and prevent mRNA decay: mRNA stabilization involves YBX1 that specifically recognizes and binds m5C-modified transcripts. Cytosine C(5)-methylation of mRNAs also regulates mRNA export: methylated transcripts are specifically recognized by THOC4/ALYREF, which mediates mRNA nucleo-cytoplasmic shuttling. Also mediates cytosine C(5)-methylation of non-coding RNAs, such as vault RNAs (vtRNAs), promoting their processing into regulatory small RNAs. Cytosine C(5)-methylation of vtRNA VTRNA1.1 promotes its processing into small-vault RNA4 (svRNA4) and regulates epidermal differentiation. May act downstream of Myc to regulate epidermal cell growth and proliferation. Required for proper spindle assembly and chromosome segregation, independently of its methyltransferase activity. In Mus musculus (Mouse), this protein is RNA cytosine C(5)-methyltransferase NSUN2.